Here is a 763-residue protein sequence, read N- to C-terminus: MQNCRRCISLTGLLRMTLYLRPSFSIDLSLRRLHRAAFLFSRKKPETNLSTLFKPVQVHAYVDSEDVGSELSGKLEKAELLKILNKFTQRREIKSLCNENGLDDYLQQQAFGSFRRFCIEAENLPVDLHITFSDITQGAGHIDDIFPYFLRHAKTVFPHLDCMDDLKKISDLRQPANWYSNARAITRKIVFHAGPTNSGKTYHAMERYLSAKTGVYCGPLKLLATEVYNKANERGTPCDLVTGEERKFGISESLPANHVACTVEMTSVNTPYEVAVIDEIQQIRDPQRGWAWTRAFLGLIADEVHVCGEPGALDLLQKICETTGETVEVRLYDRLTELTVENTALGSLDNIVPGDCIVCFSKHDIYTVSREIEARGKEVAVIYGGLPPGTKLAQAAKFNDPANSCKVMVATDAIGMGLNLSIRRIIFYSLIKPSMNERGEREIDTISVSSALQIAGRAGRFRTQWEHGYVTAFKSEDLQTLQRILARTPEPIKQAGLHPTADQIELYAYHLPSSSLSNLMDIFVNLCTVDDSLYFMCNIEDFKFLAEMIQHVALPLRARYVFCCAPINRKMPFVCSMFLKVARQYSRNEPITFDFIKKNCGWPFKLPKTILDLVHLEAVFDVMDLYLWLSYRFMDLFPEAAYVRDAQKELDEIIQQGVFQITRLLKNTEASQDGETSNYAIRRITHVKEPRLPSLSRGRLTERLLAQGLLTPGMLSELRKEWDAQQLGKSNSQSNENSEPVVNSDDEDNYSGIGRKTRKKRRK.

The transit peptide at 1 to 43 (MQNCRRCISLTGLLRMTLYLRPSFSIDLSLRRLHRAAFLFSRK) directs the protein to the mitochondrion. The Helicase ATP-binding domain maps to 181–321 (NARAITRKIV…ALDLLQKICE (141 aa)). Position 194–201 (194–201 (GPTNSGKT)) interacts with ATP. In terms of domain architecture, Helicase C-terminal spans 330–508 (RLYDRLTELT…PTADQIELYA (179 aa)). Residues 724 to 763 (AQQLGKSNSQSNENSEPVVNSDDEDNYSGIGRKTRKKRRK) form a disordered region. The segment covering 727 to 741 (LGKSNSQSNENSEPV) has biased composition (polar residues).

The protein belongs to the helicase family. Mg(2+) is required as a cofactor. It depends on Mn(2+) as a cofactor.

The protein localises to the mitochondrion. It catalyses the reaction ATP + H2O = ADP + phosphate + H(+). In terms of biological role, major helicase player in mitochondrial RNA metabolism and maintenance. Likely component of the mitochondrial degradosome (mtEXO) complex, that degrades 3' overhang double-stranded RNA with a 3'-to-5' directionality in an ATP-dependent manner. ATPase and ATP-dependent multisubstrate helicase, able to unwind double-stranded (ds) DNA and RNA, and RNA/DNA heteroduplexes in the 5'-to-3' direction. Regulates mRNA stability and is required for the correct processing and maturation of mitochondrial transcripts. The protein is ATP-dependent RNA helicase SUV3 homolog, mitochondrial of Drosophila melanogaster (Fruit fly).